The sequence spans 495 residues: Polybrominated aromatic compounds synthase (495 aa).

Cysteine 437 contributes to the heme binding site.

This sequence belongs to the cytochrome P450 family. Heme is required as a cofactor.

Functionally, cytochrome P450 protein involved in the biosynthesis of polybrominated aromatic organic compounds. In the presence of ferredoxin, ferredoxin reductase and NADH, catalyzes the coupling of bromophenols and bromopyrroles, forming various polybrominated biphenyls and hydroxylated polybrominated diphenyl ethers (OH-BDE). Can also mediate the heterocoupling of 3,5-dibromocatechol, forming six different compounds, including polybrominated dibenzo-p-dioxins, which are among the most toxic molecules known to man. The protein is Polybrominated aromatic compounds synthase of Marinomonas mediterranea (strain ATCC 700492 / JCM 21426 / NBRC 103028 / MMB-1).